Reading from the N-terminus, the 197-residue chain is OV-16 antigen (197 aa).

Residues 1 to 16 (MHCLQVVIAIVLYSFG) form the signal peptide. N-linked (GlcNAc...) asparagine glycosylation is found at Asn-56, Asn-61, Asn-119, and Asn-124.

Belongs to the phosphatidylethanolamine-binding protein family. As to expression, hypodermis, cuticle and uterus.

The protein is OV-16 antigen (OV16) of Onchocerca volvulus.